Reading from the N-terminus, the 286-residue chain is Undecaprenyl-diphosphatase (286 aa).

A run of 7 helical transmembrane segments spans residues 50–70 (GAAF…VYFW), 97–117 (MGWL…IFQD), 126–146 (LWIV…ADAV), 156–176 (LTYK…IPGV), 200–220 (SFLL…YKVM), 236–256 (LATL…LKFV), and 264–284 (FVWY…FNVI).

This sequence belongs to the UppP family.

The protein localises to the cell membrane. It carries out the reaction di-trans,octa-cis-undecaprenyl diphosphate + H2O = di-trans,octa-cis-undecaprenyl phosphate + phosphate + H(+). Its function is as follows. Catalyzes the dephosphorylation of undecaprenyl diphosphate (UPP). Confers resistance to bacitracin. This chain is Undecaprenyl-diphosphatase, found in Arthrobacter sp. (strain FB24).